Reading from the N-terminus, the 268-residue chain is MLAIAFPGIDPVAFELGPIVIRWYALAYLAGFVLGWRYCLALARSTPGRPSAEDYDDFLTWAVVGVILGGRIGYVLFYNLPFYLQNPLDALMVWHGGMSFHGGLIGVLGAILLFCWKRGLSPLAFGDLIAAAAPIGLFFGRIANFINGELYGRPAPDVSWAVVFPRDPLQVPRHPSQLYESFLEGAVLFVLLAILVRMPAVRGRAGMTAGIFFIGYGLSRIIAEFFREPDAQLGFLYAGATMGQLLSVPMVLFGVWLVAQARRRPAAI.

4 consecutive transmembrane segments (helical) span residues 23-43 (WYAL…LALA), 58-78 (FLTW…VLFY), 96-116 (GGMS…LFCW), and 119-139 (GLSP…GLFF). R141 is an a 1,2-diacyl-sn-glycero-3-phospho-(1'-sn-glycerol) binding site. 3 helical membrane-spanning segments follow: residues 181-201 (SFLE…MPAV), 206-226 (GMTA…AEFF), and 238-258 (AGAT…VWLV).

The protein belongs to the Lgt family.

The protein resides in the cell inner membrane. The catalysed reaction is L-cysteinyl-[prolipoprotein] + a 1,2-diacyl-sn-glycero-3-phospho-(1'-sn-glycerol) = an S-1,2-diacyl-sn-glyceryl-L-cysteinyl-[prolipoprotein] + sn-glycerol 1-phosphate + H(+). It functions in the pathway protein modification; lipoprotein biosynthesis (diacylglyceryl transfer). Functionally, catalyzes the transfer of the diacylglyceryl group from phosphatidylglycerol to the sulfhydryl group of the N-terminal cysteine of a prolipoprotein, the first step in the formation of mature lipoproteins. The protein is Phosphatidylglycerol--prolipoprotein diacylglyceryl transferase of Azospirillum brasilense.